Here is a 612-residue protein sequence, read N- to C-terminus: Siderophore iron transporter 1 (612 aa).

Phosphoserine is present on residues Ser-5, Ser-21, Ser-22, Ser-36, and Ser-41. A run of 14 helical transmembrane segments spans residues 91 to 111 (ISFY…SFQA), 125 to 145 (FAGH…SAAI), 159 to 179 (LEAF…MAAS), 188 to 208 (GSVL…IFMA), 218 to 238 (LVLG…PRVA), 249 to 269 (WGIA…LAVY), 299 to 319 (IIGL…ISLA), 331 to 351 (FIVM…YEIF), 365 to 385 (EPTI…FYCW), 406 to 426 (YISY…GILI), 434 to 453 (WYFV…MIRY), 464 to 484 (IMPQ…LTVA), 495 to 515 (AIVT…GSAI), and 573 to 593 (ILTS…WFVA).

It belongs to the major facilitator superfamily.

The protein localises to the membrane. In terms of biological role, involved in the transport of siderophore iron and so has a role in iron homeostasis. The polypeptide is Siderophore iron transporter 1 (str1) (Schizosaccharomyces pombe (strain 972 / ATCC 24843) (Fission yeast)).